The sequence spans 517 residues: Mucin-like protein 3 (517 aa).

An N-terminal signal peptide occupies residues 1 to 29 (MAQPVHSLCSAFGLQCCLLFLLASWGAGA). The Extracellular segment spans residues 30–448 (TTFQEYQKTG…GENDSFPAWA (419 aa)). The tract at residues 67–341 (SGQRPPELPK…PTENLGNTTL (275 aa)) is disordered. Residues 83 to 93 (QKRHCNTTRHS) are compositionally biased toward basic residues. N-linked (GlcNAc...) asparagine glycosylation is present at Asn88. A compositionally biased stretch (basic and acidic residues) spans 105-116 (TIDHKSSTDNHE). N-linked (GlcNAc...) asparagine glycosylation is present at Asn124. Polar residues predominate over residues 169-179 (RKSTTGKSTVT). Residues 180–190 (RKSDKTGRPLE) are compositionally biased toward basic and acidic residues. Low complexity predominate over residues 194-213 (STLDKTSTSSHKTTTSFHNS). Polar residues-rich tracts occupy residues 214–225 (GNSQTKQKSTSF), 232–243 (ASKTTYKTTGTP), and 263–283 (TKTT…QSLA). A compositionally biased stretch (basic and acidic residues) spans 305-317 (TENRERTANENKK). The N-linked (GlcNAc...) asparagine glycan is linked to Asn338. A helical membrane pass occupies residues 449 to 469 (IVIVVLVAVILLLVFLGLIFL). Over 470-517 (VSYMMRTRRTLTQNTQYNDAEDEGGPNSYPVYLMEQQNLGMGQIPSPR) the chain is Cytoplasmic.

Detected in lung, esophagus, stomach, rectum, skin, cervix, testis, kidney, uterus and small intestine. Expressed in pancreas (at protein level).

It is found in the cell membrane. It localises to the cytoplasm. Its function is as follows. May modulate NF-kappaB signaling and play a role in cell growth. In Homo sapiens (Human), this protein is Mucin-like protein 3.